Reading from the N-terminus, the 402-residue chain is Propionate kinase (402 aa).

The ATP site is built by N11 and K18. Position 11 (N11) interacts with Mg(2+). R86 contributes to the substrate binding site. The active-site Proton donor/acceptor is D143. ATP-binding positions include H175, 203–207 (HLGNG), 278–280 (DLR), and 326–330 (GIGEN).

The protein belongs to the acetokinase family. TdcD subfamily. Homodimer. Mg(2+) is required as a cofactor.

The enzyme catalyses propanoate + ATP = propanoyl phosphate + ADP. It participates in amino-acid degradation; L-threonine degradation via propanoate pathway; propanoate from L-threonine: step 4/4. In terms of biological role, catalyzes the conversion of propionyl phosphate and ADP to propionate and ATP. The sequence is that of Propionate kinase from Salmonella typhimurium (strain D23580).